A 214-amino-acid chain; its full sequence is Charged multivesicular body protein 2b-A (214 aa).

Residues 25–55 (QRAITRDRTALEKQEKQLEMEIKKMAKAGNK) adopt a coiled-coil conformation. The tract at residues 178-214 (MAKAPSAAKGLPSASASKSTGISDEEIERQLKALGVD) is disordered. An MIT-interacting motif motif is present at residues 202–212 (EEIERQLKALG).

The protein belongs to the SNF7 family. As to quaternary structure, probable core component of the endosomal sorting required for transport complex III (ESCRT-III). ESCRT-III components are thought to multimerize to form a flat lattice on the perimeter membrane of the endosome.

It is found in the cytoplasm. It localises to the cytosol. Its subcellular location is the late endosome membrane. Its function is as follows. Probable core component of the endosomal sorting required for transport complex III (ESCRT-III) which is involved in multivesicular bodies (MVBs) formation and sorting of endosomal cargo proteins into MVBs. MVBs contain intraluminal vesicles (ILVs) that are generated by invagination and scission from the limiting membrane of the endosome and mostly are delivered to lysosomes enabling degradation of membrane proteins, such as stimulated growth factor receptors, lysosomal enzymes and lipids. In Xenopus laevis (African clawed frog), this protein is Charged multivesicular body protein 2b-A (chmp2b-a).